A 351-amino-acid chain; its full sequence is 3-dehydroquinate synthase (351 aa).

NAD(+) is bound by residues 60-65 (DGEEYK), 94-98 (GVISD), 118-119 (TT), lysine 131, lysine 140, and 158-161 (FLKT). Positions 173, 239, and 256 each coordinate Zn(2+).

It belongs to the sugar phosphate cyclases superfamily. Dehydroquinate synthase family. Requires Co(2+) as cofactor. Zn(2+) is required as a cofactor. NAD(+) serves as cofactor.

The protein localises to the cytoplasm. It carries out the reaction 7-phospho-2-dehydro-3-deoxy-D-arabino-heptonate = 3-dehydroquinate + phosphate. Its pathway is metabolic intermediate biosynthesis; chorismate biosynthesis; chorismate from D-erythrose 4-phosphate and phosphoenolpyruvate: step 2/7. Functionally, catalyzes the conversion of 3-deoxy-D-arabino-heptulosonate 7-phosphate (DAHP) to dehydroquinate (DHQ). In Campylobacter jejuni subsp. jejuni serotype O:23/36 (strain 81-176), this protein is 3-dehydroquinate synthase.